The following is a 594-amino-acid chain: Actin-histidine N-methyltransferase (594 aa).

Residues 1 to 23 form a disordered region; that stretch reads MGKKSRVKTQKSGTGATASVSPK. The segment covering 10 to 23 has biased composition (polar residues); sequence QKSGTGATASVSPK. Residues Arg75, 104 to 106, Arg254, 275 to 279, and 325 to 327 each bind S-adenosyl-L-methionine; these read EGF, DMCNH, and SGF. Residues 94–314 form the SET domain; that stretch reads EGFEMVSFKE…AGEQIYIFYG (221 aa). A disordered region spans residues 553-594; that stretch reads INGENSIPNGTRLEKEDLNQEQSKRVTEDAKEPSDSTEEVKE. Positions 564–594 are enriched in basic and acidic residues; sequence RLEKEDLNQEQSKRVTEDAKEPSDSTEEVKE.

It belongs to the class V-like SAM-binding methyltransferase superfamily. SETD3 actin-histidine methyltransferase family. Interacts with MYOD1. Phosphorylated by GSK3B, which is required for recognition by the SCF(FBXW7) complex and subsequent degradation. Post-translationally, ubiquitinated by the SCF(FBXW7) complex following phosphorylation by GSK3B, leading to its degradation by the proteasome.

It is found in the cytoplasm. The protein localises to the nucleus. The enzyme catalyses L-histidyl-[protein] + S-adenosyl-L-methionine = N(tele)-methyl-L-histidyl-[protein] + S-adenosyl-L-homocysteine + H(+). Protein-histidine N-methyltransferase that specifically mediates 3-methylhistidine (tele-methylhistidine) methylation of actin at 'His-73'. Histidine methylation of actin is required for smooth muscle contraction of the laboring uterus during delivery. Does not have protein-lysine N-methyltransferase activity and probably only catalyzes histidine methylation of actin. In Rhinolophus ferrumequinum (Greater horseshoe bat), this protein is Actin-histidine N-methyltransferase.